Reading from the N-terminus, the 200-residue chain is Holliday junction branch migration complex subunit RuvA (200 aa).

The segment at 1 to 64 (MIGHLRGIIV…EDAHTLYGFH (64 aa)) is domain I. The tract at residues 65-143 (NDHERRLFRA…RWHTNDTPSP (79 aa)) is domain II. The interval 133–152 (SRWHTNDTPSPEGLRSSNTQ) is disordered. The flexible linker stretch occupies residues 144–148 (EGLRS). The tract at residues 149-200 (SNTQPTQDAISALMALGYKPQEAKRAIDAIQKPDLSAETLIRLALKQMVLGT) is domain III.

The protein belongs to the RuvA family. In terms of assembly, homotetramer. Forms an RuvA(8)-RuvB(12)-Holliday junction (HJ) complex. HJ DNA is sandwiched between 2 RuvA tetramers; dsDNA enters through RuvA and exits via RuvB. An RuvB hexamer assembles on each DNA strand where it exits the tetramer. Each RuvB hexamer is contacted by two RuvA subunits (via domain III) on 2 adjacent RuvB subunits; this complex drives branch migration. In the full resolvosome a probable DNA-RuvA(4)-RuvB(12)-RuvC(2) complex forms which resolves the HJ.

The protein resides in the cytoplasm. Functionally, the RuvA-RuvB-RuvC complex processes Holliday junction (HJ) DNA during genetic recombination and DNA repair, while the RuvA-RuvB complex plays an important role in the rescue of blocked DNA replication forks via replication fork reversal (RFR). RuvA specifically binds to HJ cruciform DNA, conferring on it an open structure. The RuvB hexamer acts as an ATP-dependent pump, pulling dsDNA into and through the RuvAB complex. HJ branch migration allows RuvC to scan DNA until it finds its consensus sequence, where it cleaves and resolves the cruciform DNA. This chain is Holliday junction branch migration complex subunit RuvA, found in Coxiella burnetii (strain CbuK_Q154) (Coxiella burnetii (strain Q154)).